Here is a 309-residue protein sequence, read N- to C-terminus: Putative proline iminopeptidase (309 aa).

The AB hydrolase-1 domain occupies 33 to 291 (LYVHGGPGSG…LYVTNNAGHS (259 aa)). The active-site Nucleophile is the serine 105. Aspartate 262 is a catalytic residue. Catalysis depends on histidine 290, which acts as the Proton donor.

It belongs to the peptidase S33 family.

It localises to the cytoplasm. It catalyses the reaction Release of N-terminal proline from a peptide.. In terms of biological role, specifically catalyzes the removal of N-terminal proline residues from peptides. This is Putative proline iminopeptidase (pip) from Mycoplasma pneumoniae (strain ATCC 29342 / M129 / Subtype 1) (Mycoplasmoides pneumoniae).